A 233-amino-acid polypeptide reads, in one-letter code: Ribose-5-phosphate isomerase A (233 aa).

Substrate contacts are provided by residues Thr-28–Thr-31, Asp-83–Asp-86, and Lys-96–Gly-99. Glu-105 (proton acceptor) is an active-site residue. Lys-123 serves as a coordination point for substrate.

Belongs to the ribose 5-phosphate isomerase family. In terms of assembly, homodimer.

The enzyme catalyses aldehydo-D-ribose 5-phosphate = D-ribulose 5-phosphate. It functions in the pathway carbohydrate degradation; pentose phosphate pathway; D-ribose 5-phosphate from D-ribulose 5-phosphate (non-oxidative stage): step 1/1. Its function is as follows. Catalyzes the reversible conversion of ribose-5-phosphate to ribulose 5-phosphate. The chain is Ribose-5-phosphate isomerase A from Rhizobium rhizogenes (strain K84 / ATCC BAA-868) (Agrobacterium radiobacter).